A 341-amino-acid chain; its full sequence is N-acetyl-gamma-glutamyl-phosphate reductase (341 aa).

The active site involves Cys149.

Belongs to the NAGSA dehydrogenase family. Type 1 subfamily.

It localises to the cytoplasm. The enzyme catalyses N-acetyl-L-glutamate 5-semialdehyde + phosphate + NADP(+) = N-acetyl-L-glutamyl 5-phosphate + NADPH + H(+). It functions in the pathway amino-acid biosynthesis; L-arginine biosynthesis; N(2)-acetyl-L-ornithine from L-glutamate: step 3/4. In terms of biological role, catalyzes the NADPH-dependent reduction of N-acetyl-5-glutamyl phosphate to yield N-acetyl-L-glutamate 5-semialdehyde. This Methanocaldococcus jannaschii (strain ATCC 43067 / DSM 2661 / JAL-1 / JCM 10045 / NBRC 100440) (Methanococcus jannaschii) protein is N-acetyl-gamma-glutamyl-phosphate reductase.